A 466-amino-acid chain; its full sequence is MAPGIPAAMERPHFIGIGGAGMSGIAKILAQRGAKVAGSDAKESATAESLRALGATVHIGHAAGHLADDASCVVVSSAIRADNPELLRAGELAVPVVHRSDALASLMNGLRAIAVAGTHGKTTTTSMLAVALSSLGLAPSYAIGGDLEGPGTNATHGEGDIFVAEADESDRSFQKYDPEVAIVLNVELDHHANYASMDEIYDSFETFVGKIVPGGTLVVSADQPGAVELTRRVRDLSDLKVVTYGCAEDADVRVHKVTPRGLTSEVTVLLNGKFLTFTVSVPGAHYAHNAVAALAAGVALGIPAHNLASALGSYTGVKRRLQLKGEAAGVQVIDSYAHHPTEMTADLEAMRGAAADARILVVFQPHLFSRTQELGTEMGQALARADASVVLDIYPAREDPIPGITSALIIDAAKEAGAEVTAVHDQADVPAAVAGMAKSGDLVLTMGAGDVTDLGPRILDHLASGR.

117–123 (GTHGKTT) serves as a coordination point for ATP.

Belongs to the MurCDEF family.

The protein resides in the cytoplasm. The enzyme catalyses UDP-N-acetyl-alpha-D-muramate + L-alanine + ATP = UDP-N-acetyl-alpha-D-muramoyl-L-alanine + ADP + phosphate + H(+). It functions in the pathway cell wall biogenesis; peptidoglycan biosynthesis. Its function is as follows. Cell wall formation. The protein is UDP-N-acetylmuramate--L-alanine ligase of Streptomyces griseus subsp. griseus (strain JCM 4626 / CBS 651.72 / NBRC 13350 / KCC S-0626 / ISP 5235).